Consider the following 97-residue polypeptide: Apolipoprotein C-II (97 aa).

The signal sequence occupies residues 1-22 (MGSRFFLALFLVILMLGNEVQG). The tract at residues 63 to 71 (SMDEKLRDM) is lipid binding. The lipoprotein lipase cofactor stretch occupies residues 75–97 (SSAAMSTYAGIFTDQLLTLLRGE).

It belongs to the apolipoprotein C2 family. Adult and fetal liver, intestine and peritoneal macrophages.

Its subcellular location is the secreted. Component of chylomicrons, very low-density lipoproteins (VLDL), low-density lipoproteins (LDL), and high-density lipoproteins (HDL) in plasma. Plays an important role in lipoprotein metabolism as an activator of lipoprotein lipase. This Mus musculus (Mouse) protein is Apolipoprotein C-II (Apoc2).